The chain runs to 87 residues: MTILASISSIGNVKSISKSNNVSLSNSSSSLQSMNSIQCGGCGNGGLLGAVGGLVGGVLTGTGVIVGSVLHGVGSILTGGSNNCGCN.

Belongs to the hssA/B family.

In Dictyostelium discoideum (Social amoeba), this protein is HssA/B-like protein 18 (hssl18).